Here is a 215-residue protein sequence, read N- to C-terminus: S-crystallin 3 (215 aa).

The 79-residue stretch at 2 to 80 (PSYTLHYFNH…YLAREFGYHG (79 aa)) folds into the GST N-terminal domain. In terms of domain architecture, GST C-terminal spans 82–215 (SNMEMARVDF…YLKKRCRTDF (134 aa)).

The protein belongs to the GST superfamily. Lens.

Functionally, S-crystallins are structural components of squids and octopi eye lens. Contains relatively little if any GST activity. The chain is S-crystallin 3 from Enteroctopus dofleini (North Pacific giant octopus).